We begin with the raw amino-acid sequence, 241 residues long: Putative CRISPR-associated endoribonuclease-like protein Cas6 (241 aa).

It belongs to the CRISPR-associated protein Cas6/Cse3/CasE family. Binds crRNA.

Functionally, CRISPR (clustered regularly interspaced short palindromic repeat), is an adaptive immune system that provides protection against mobile genetic elements (viruses, transposable elements and conjugative plasmids). CRISPR clusters contain sequences complementary to antecedent mobile elements and target invading nucleic acids. CRISPR clusters are transcribed and processed into CRISPR RNA (crRNA), also called psiRNA (prokaryotic silencing) in this organism (Potential). The sequence is that of Putative CRISPR-associated endoribonuclease-like protein Cas6 (cas6b) from Pyrococcus furiosus (strain ATCC 43587 / DSM 3638 / JCM 8422 / Vc1).